Reading from the N-terminus, the 478-residue chain is Protein MAINTENANCE OF MERISTEMS (478 aa).

Residues Ala459–Glu478 form a disordered region. The Nuclear localization signal motif lies at Lys464–Arg468.

In terms of tissue distribution, expressed in root meristem, root vasculature, shoot apical meristem (SAM), leaf vasculature and ovules.

The protein resides in the nucleus. In terms of biological role, required for the organization of the root apical meristem (RAM) and the shoot apical meristem (SAM). Required to maintain genome stability and cell division activity in meristematic cells. The chain is Protein MAINTENANCE OF MERISTEMS from Arabidopsis thaliana (Mouse-ear cress).